Here is a 447-residue protein sequence, read N- to C-terminus: MEFTASPKPQLSSRANAFSIAALMSSGGSKEKEATENTIKPLEQFVEKSSCAQPLGELTSLDAHGEFGGGSGSSPSSSSLCTEPLIPTTPIIPSEEMAKIACSLETKELWDKFHELGTEMIITKSGRRMFPTIRVSFSGVDPEAKYIVLMDIVPVDNKRYRYAYHRSSWLVAGKADPPLPARLYVHPDSPFTGEQLLKQMVSFEKVKLTNNELDQHGHIILNSMHKYQPRVHIIKKKDHTASLLNLKSEEFRTFIFPETVFTAVTAYQNQLITKLKIDSNPFAKGFRDSSRLTDIERESVESLIQKHSYARSPIRTYGGEEDVLGDESQTTPNRGSAFTTSDNLSLSSWVSSSSSFPGFQHPQSLTALGTSTASIATPIPHPIQGSLPPYSRLGMPLTPSAIASSMQGSGPTFPSFHMPRYHHYFQQGPYAAIQGLRHSSAVMTPFV.

Positions 62 to 81 (DAHGEFGGGSGSSPSSSSLC) are disordered. Residues 109-288 (LWDKFHELGT…SNPFAKGFRD (180 aa)) constitute a DNA-binding region (T-box). The interval 316–340 (TYGGEEDVLGDESQTTPNRGSAFTT) is disordered. Over residues 327–340 (ESQTTPNRGSAFTT) the composition is skewed to polar residues.

It is found in the nucleus. Acts as a transcriptional activator and repressor required for cardiac development and may have key roles in the maintenance of functional and structural phenotypes in adult heart. This is T-box transcription factor TBX20 (TBX20) from Homo sapiens (Human).